The chain runs to 159 residues: Ribosomal RNA large subunit methyltransferase H (159 aa).

S-adenosyl-L-methionine-binding positions include Leu-76, Gly-108, and 127-132 (FSKMTF).

The protein belongs to the RNA methyltransferase RlmH family. In terms of assembly, homodimer.

It localises to the cytoplasm. The enzyme catalyses pseudouridine(1915) in 23S rRNA + S-adenosyl-L-methionine = N(3)-methylpseudouridine(1915) in 23S rRNA + S-adenosyl-L-homocysteine + H(+). In terms of biological role, specifically methylates the pseudouridine at position 1915 (m3Psi1915) in 23S rRNA. In Bacillus subtilis (strain 168), this protein is Ribosomal RNA large subunit methyltransferase H.